Here is a 515-residue protein sequence, read N- to C-terminus: Protein DETOXIFICATION 42 (515 aa).

Over 1–35 the chain is Cytoplasmic; it reads MMSEDGYNTDFPRNPLYIFFSDFRSVLKFDELGLE. A helical transmembrane segment spans residues 36–56; it reads IARIALPAALALTADPIASLV. Residues 57 to 58 are Extracellular-facing; sequence DT. Residues 59-79 form a helical membrane-spanning segment; that stretch reads AFIGQIGPVELAAVGVSIALF. The Cytoplasmic portion of the chain corresponds to 80–168; sequence NQVSRIAIFP…AKKRNIPSAS (89 aa). The chain crosses the membrane as a helical span at residues 169–189; the sequence is SALIIGGVLGLFQAVFLISAA. At 190-211 the chain is on the extracellular side; that stretch reads KPLLSFMGVKHDSPMMRPSQRY. A helical transmembrane segment spans residues 212 to 232; the sequence is LSLRSLGAPAVLLSLAAQGVF. Over 233-242 the chain is Cytoplasmic; the sequence is RGFKDTTTPL. Residues 243-263 form a helical membrane-spanning segment; sequence FATVIGDVTNIILDPIFIFVF. Residues 264 to 266 are Extracellular-facing; the sequence is RLG. The helical transmembrane segment at 267–287 threads the bilayer; it reads VTGAATAHVISQYLMCGILLW. Residues 288–312 are Cytoplasmic-facing; it reads KLMGQVDIFNMSTKHLQFCRFMKNG. The helical transmembrane segment at 313–333 threads the bilayer; the sequence is FLLLMRVIAVTFCVTLSASLA. The Extracellular portion of the chain corresponds to 334–349; sequence AREGSTSMAAFQVCLQ. The chain crosses the membrane as a helical span at residues 350–370; it reads VWLATSLLADGYAVAGQAILA. Residues 371–390 lie on the Cytoplasmic side of the membrane; sequence SAFAKKDYKRAAATASRVLQ. Residues 391-411 form a helical membrane-spanning segment; sequence LGLVLGFVLAVILGAGLHFGA. Residues 412 to 423 lie on the Extracellular side of the membrane; that stretch reads RVFTKDDKVLHL. The helical transmembrane segment at 424–444 threads the bilayer; it reads ISIGLPFVAGTQPINALAFVF. Residues 445 to 453 are Cytoplasmic-facing; that stretch reads DGVNFGASD. Residues 454-474 form a helical membrane-spanning segment; that stretch reads FGYAAASLVMVAIVSILCLLF. The Extracellular portion of the chain corresponds to 475–480; it reads LSSTHG. Residues 481–501 traverse the membrane as a helical segment; sequence FIGLWFGLTIYMSLRAAVGFW. Residues 502-515 lie on the Cytoplasmic side of the membrane; that stretch reads RIGTGTGPWSFLRS.

This sequence belongs to the multi antimicrobial extrusion (MATE) (TC 2.A.66.1) family. In terms of tissue distribution, expressed in roots, but not in shoots. Detected in the mature regions of the root, extending from above the root-hair region to the root-shoot junction.

It is found in the cell membrane. In terms of biological role, citrate transporter critical for aluminum tolerance. Responsible for citrate exudation into the rhizosphere to protect roots from aluminum toxicity. This Arabidopsis thaliana (Mouse-ear cress) protein is Protein DETOXIFICATION 42.